The sequence spans 269 residues: Chymotrypsin-like elastase family member 2A (269 aa).

The N-terminal stretch at 1–16 (MIRALLLSTLVAGALS) is a signal peptide. The propeptide at 17 to 28 (CGVPTYPPQLSR) is activation peptide. Positions 29 to 267 (VVGGEDARPN…YNDWISSVIE (239 aa)) constitute a Peptidase S1 domain. Cys58 and Cys74 are joined by a disulfide. Active-site charge relay system residues include His73 and Asp121. 3 disulfide bridges follow: Cys155–Cys222, Cys186–Cys202, and Cys212–Cys243. Ser216 functions as the Charge relay system in the catalytic mechanism.

This sequence belongs to the peptidase S1 family. Elastase subfamily. In terms of assembly, interacts with CPA1. Interacts with SERPINA1. As to expression, pancreas.

It localises to the secreted. The catalysed reaction is Preferential cleavage: Leu-|-Xaa, Met-|-Xaa and Phe-|-Xaa. Hydrolyzes elastin.. In terms of biological role, elastase that enhances insulin signaling and might have a physiologic role in cellular glucose metabolism. Circulates in plasma and reduces platelet hyperactivation, triggers both insulin secretion and degradation, and increases insulin sensitivity. The protein is Chymotrypsin-like elastase family member 2A (CELA2A) of Bos taurus (Bovine).